We begin with the raw amino-acid sequence, 177 residues long: Thymidine kinase (177 aa).

Residue 11–18 coordinates ATP; that stretch reads GPMFSGKS. Glutamate 83 serves as the catalytic Proton acceptor. Position 113 (phenylalanine 113) interacts with substrate. Zn(2+) is bound by residues cysteine 138 and cysteine 141. Residue 157–161 coordinates substrate; it reads IEIIG. Zn(2+) is bound by residues cysteine 170 and cysteine 173.

It belongs to the thymidine kinase family. Homotetramer. Two molecules of substrate bind to each enzyme tetramer.

The catalysed reaction is thymidine + ATP = dTMP + ADP + H(+). In terms of biological role, phosphorylates thymidine and thymidine analogs, such as azidothymidine (AZT). Part of the salvage pathway for pyrimidine deoxyribonucleotide synthesis. In Variola virus (isolate Human/India/Ind3/1967) (VARV), this protein is Thymidine kinase (OPG101).